Reading from the N-terminus, the 577-residue chain is CDPK-related kinase 7 (577 aa).

A disordered region spans residues 1-38 (MGLCHGKPIEQQSKNLPISNEIEETPKNSSQKAKSSGF). G2 carries N-myristoyl glycine lipidation. The Protein kinase domain occupies 124-386 (YEIDGEVGRG…AAQALCHPWL (263 aa)). ATP is bound by residues 130 to 138 (VGRGHFGYT) and K156. Catalysis depends on D252, which acts as the Proton acceptor. Position 292 is a phosphoserine (S292). S334 is subject to Phosphoserine; by CPK1, CPK10 and CPK34. The interval 391-421 (ELKIPSDMIIYKLVKVYIMSSSLRKSALAAL) is autoinhibitory domain. A calmodulin binding (CaMBD) region spans residues 410-430 (SSSLRKSALAALAKTLTVPQL). EF-hand domains are found at residues 428–464 (PQLT…STEA), 465–500 (TKDS…VYQL), 501–540 (EAME…GPSV), and 543–572 (HVVL…VSSR). Ca(2+)-binding residues include S443, N445, Y447, K484, E489, D520, N522, E529, D554, and K556. At S558 the chain carries Phosphoserine.

Belongs to the protein kinase superfamily. Ser/Thr protein kinase family. CDPK subfamily. In terms of assembly, binds calmodulin (CaM) in a calcium-dependent manner. Post-translationally, autophosphorylated.

It is found in the membrane. It catalyses the reaction L-seryl-[protein] + ATP = O-phospho-L-seryl-[protein] + ADP + H(+). The enzyme catalyses L-threonyl-[protein] + ATP = O-phospho-L-threonyl-[protein] + ADP + H(+). Activated by calcium and calmodulin. Autophosphorylation may play an important role in the regulation of the kinase activity. May play a role in signal transduction pathways that involve calcium as a second messenger. This is CDPK-related kinase 7 (CRK7) from Arabidopsis thaliana (Mouse-ear cress).